We begin with the raw amino-acid sequence, 318 residues long: Transaldolase (318 aa).

Lys-132 functions as the Schiff-base intermediate with substrate in the catalytic mechanism.

It belongs to the transaldolase family. Type 1 subfamily. Homodimer.

The protein resides in the cytoplasm. The enzyme catalyses D-sedoheptulose 7-phosphate + D-glyceraldehyde 3-phosphate = D-erythrose 4-phosphate + beta-D-fructose 6-phosphate. It participates in carbohydrate degradation; pentose phosphate pathway; D-glyceraldehyde 3-phosphate and beta-D-fructose 6-phosphate from D-ribose 5-phosphate and D-xylulose 5-phosphate (non-oxidative stage): step 2/3. Transaldolase is important for the balance of metabolites in the pentose-phosphate pathway. The chain is Transaldolase from Shewanella baltica (strain OS155 / ATCC BAA-1091).